Consider the following 946-residue polypeptide: Rho GTPase-activating protein 4 (946 aa).

In terms of domain architecture, F-BAR spans 19–317 (TQVKEMRWQL…AVEALDPPGD (299 aa)). Residues 128–195 (LAQRLSHIAE…REAERQEEKR (68 aa)) are a coiled coil. Residues 187-196 (EAERQEEKRA) are compositionally biased toward basic and acidic residues. 2 disordered regions span residues 187–220 (EAER…SLKK) and 402–435 (LDSF…QQQE). 2 stretches are compositionally biased toward low complexity: residues 202–211 (TTTAGATEAG) and 407–419 (TSPS…STSS). In terms of domain architecture, Rho-GAP spans 507–695 (GDMEKFIQSS…TLIVQPDRVF (189 aa)). In terms of domain architecture, SH3 spans 746-805 (EGVVEAVACFAYTGRTAQELSFRRGDVLRLHERASSDWWRGEHNGMRGLIPHKYITLPAG). A phosphoserine mark is found at serine 860, serine 901, and serine 906. Positions 885–946 (KTSVRQGLGP…QGLDTTPKPH (62 aa)) are disordered. Residues 901–910 (SPGPRSPKAP) are compositionally biased toward pro residues. Over residues 924–934 (GPGAPASPSAS) the composition is skewed to low complexity.

Interacts with NCKAP1L. In terms of tissue distribution, predominantly in hematopoietic cells (spleen, thymus and leukocytes); low levels in placenta, lung and various fetal tissues.

It is found in the cytoplasm. In terms of biological role, inhibitory effect on stress fiber organization. May down-regulate Rho-like GTPase in hematopoietic cells. The chain is Rho GTPase-activating protein 4 from Homo sapiens (Human).